Consider the following 72-residue polypeptide: Translation initiation factor IF-1 (72 aa).

Residues 1–72 form the S1-like domain; the sequence is MAKEDNIEMQ…SKGRIVFRSR (72 aa).

It belongs to the IF-1 family. Component of the 30S ribosomal translation pre-initiation complex which assembles on the 30S ribosome in the order IF-2 and IF-3, IF-1 and N-formylmethionyl-tRNA(fMet); mRNA recruitment can occur at any time during PIC assembly.

It is found in the cytoplasm. In terms of biological role, one of the essential components for the initiation of protein synthesis. Stabilizes the binding of IF-2 and IF-3 on the 30S subunit to which N-formylmethionyl-tRNA(fMet) subsequently binds. Helps modulate mRNA selection, yielding the 30S pre-initiation complex (PIC). Upon addition of the 50S ribosomal subunit IF-1, IF-2 and IF-3 are released leaving the mature 70S translation initiation complex. This chain is Translation initiation factor IF-1, found in Shewanella pealeana (strain ATCC 700345 / ANG-SQ1).